A 259-amino-acid chain; its full sequence is Haloacid dehalogenase-like hydrolase domain-containing protein 2 (259 aa).

Mg(2+) is bound by residues aspartate 13 and serine 15. Substrate is bound by residues 13-15 and 46-47; these read DLS and TN. Positions 47-71 form a coiled coil; the sequence is NTTKESKQDLLERLKKLEFDISEDE. The residue at position 50 (lysine 50) is an N6-succinyllysine. Lysine 179 provides a ligand contact to substrate. Aspartate 204 provides a ligand contact to Mg(2+).

It belongs to the HAD-like hydrolase superfamily. Mg(2+) is required as a cofactor.

This Bos taurus (Bovine) protein is Haloacid dehalogenase-like hydrolase domain-containing protein 2 (HDHD2).